We begin with the raw amino-acid sequence, 300 residues long: MPQLPAPTDVTPARKAEILAEALPYIKRFFDKTVVIKYGGNAMTDPHLKDCFARDVVLLKLVGLNPVVVHGGGPQIETLLARVGKKGEFIQGMRVTDAETMEVVEMVLGGQVNKEIVSLINQHGGKAVGLTGKDASFIRAKKLLMQKEDAAPGDVVDVGQVGEITKIDPSLIAFLDQGDFIPVIAPIGVGEAGETYNINADVVAGKLAEILKAEKLVLLTNTPGVLDKAGKLLTGLTPHQIDDLVADGTLSGGMLPKISSALDAARNGVKSVHIIDGRVEHCLLLEILTDHGVGTMIKSK.

Substrate-binding positions include 72 to 73 (GG), Arg94, and Asn197.

The protein belongs to the acetylglutamate kinase family. ArgB subfamily.

The protein localises to the cytoplasm. The enzyme catalyses N-acetyl-L-glutamate + ATP = N-acetyl-L-glutamyl 5-phosphate + ADP. It functions in the pathway amino-acid biosynthesis; L-arginine biosynthesis; N(2)-acetyl-L-ornithine from L-glutamate: step 2/4. Functionally, catalyzes the ATP-dependent phosphorylation of N-acetyl-L-glutamate. The polypeptide is Acetylglutamate kinase (Aromatoleum aromaticum (strain DSM 19018 / LMG 30748 / EbN1) (Azoarcus sp. (strain EbN1))).